The primary structure comprises 303 residues: HTH-type transcriptional regulator LysG (303 aa).

The HTH lysR-type domain occupies 6 to 62 (LDGPQLAALAAVVELGSFDAAAERLHVTPSAVSQRIKSLEQQVGQVLVVREKPCRAT). The H-T-H motif DNA-binding region spans 23 to 42 (FDAAAERLHVTPSAVSQRIK).

This sequence belongs to the LysR transcriptional regulatory family. In terms of assembly, homodimer.

In terms of biological role, positively regulates the expression of the exporter LysE and represses its own expression. In Mycobacterium bovis (strain ATCC BAA-935 / AF2122/97), this protein is HTH-type transcriptional regulator LysG.